A 60-amino-acid chain; its full sequence is Ixodegrin-like peptide (60 aa).

An N-terminal signal peptide occupies residues 1-19 (MNAVFIAALLILGTSTFDA). Residues 49-51 (RGD) carry the Cell attachment site motif.

Belongs to the ixodegrin family. Contains 3 disulfide bonds. Expressed in salivary glands.

It is found in the secreted. Its function is as follows. Tick salivary platelet aggregation inhibitor that plays an important part in the anti-hemostatic strategy of ticks. Inhibits platelet aggregation induced by ADP, thrombin and thromboxane A2 (TXA2). Blocks platelet adhesion to soluble collagen (most probably through the binding to alpha-2/beta-1 integrin (ITGA2/ITGB1)) and binds to purified glycoprotein IIb/IIIa (ITGA2B/ITGB3) in a dose-dependent manner. In vivo, reduces thrombus weight effectively in a rat arteriovenous shunt model and inhibits thrombosis in a carrageenan-induced mouse tail thrombosis model. The polypeptide is Ixodegrin-like peptide (Ixodes scapularis (Black-legged tick)).